A 1761-amino-acid chain; its full sequence is Laminin subunit beta-4 (1761 aa).

The N-terminal stretch at 1–19 is a signal peptide; the sequence is MQFQLTLFLHLGWLSYSKA. The Laminin N-terminal domain occupies 24 to 264; it reads NRGACHPTTG…ALYEMIVRGS (241 aa). N-linked (GlcNAc...) asparagine glycans are attached at residues N169, N229, and N246. Intrachain disulfides connect C265–C274, C267–C295, C297–C306, C309–C329, C332–C341, C334–C359, C362–C371, C374–C392, C395–C408, C397–C423, C425–C434, C437–C452, C455–C468, C457–C475, C477–C486, C489–C503, C506–C518, C508–C525, and C527–C536. Laminin EGF-like domains lie at 265–331, 332–394, 395–454, and 455–505; these read CFCN…ACRS, CSCN…ACIP, CECD…GCQP, and CDCN…GCSP. In terms of domain architecture, Laminin EGF-like 5; truncated spans 506 to 552; the sequence is CDCDIGGAYSNVCSPKNGQCECRPHVTGRSCSEPAPGYFFAPLNFYL. One can recognise a Laminin IV type B domain in the interval 545 to 763; sequence FAPLNFYLYE…LIISMSAKLH (219 aa). Cystine bridges form between C769/C781, C771/C788, C790/C799, C802/C814, C817/C829, C819/C836, C838/C847, C850/C860, C863/C872, C865/C879, C882/C891, C894/C908, C913/C938, C940/C949, C952/C967, C970/C984, C972/C991, C994/C1003, C1006/C1019, C1022/C1043, C1024/C1050, C1052/C1061, C1064/C1077, C1080/C1092, C1082/C1099, C1101/C1110, C1113/C1125, C1128/C1140, C1130/C1147, C1149/C1158, and C1161/C1172. 8 Laminin EGF-like domains span residues 769 to 816, 817 to 862, 863 to 910, 911 to 969, 970 to 1021, 1022 to 1079, 1080 to 1127, and 1128 to 1174; these read CKCH…GCHP, CHCH…SCHP, CPCN…PCRP, CLCP…PCQP, CACN…TCRR, CSCH…GCQS, CDCD…RCIP, and CDCN…TCLQ. A glycan (N-linked (GlcNAc...) asparagine) is linked at N1016. N1055 is a glycosylation site (N-linked (GlcNAc...) asparagine). The domain II stretch occupies residues 1175-1375; it reads CHLCFDQWDH…PDIQILNEKV (201 aa). 5 N-linked (GlcNAc...) asparagine glycosylation sites follow: N1223, N1301, N1326, N1333, and N1354. Residues 1243 to 1301 adopt a coiled-coil conformation; it reads KVKDYHDSVRRQIMQLNEQLKAVYEFQDLKDTIERAKNEADLLLEDLQEEIDLQSSVLN. The tract at residues 1376–1408 is domain alpha; the sequence is CGDPGNVPCVPLPCGGALCTGRKGHRKCRGPGC. Positions 1409 to 1761 are domain I; sequence HGSLTLSTNA…QEKKYARCYS (353 aa). Residues 1416 to 1480 adopt a coiled-coil conformation; it reads TNALQKAQEA…SDSEEENINL (65 aa). N-linked (GlcNAc...) asparagine glycans are attached at residues N1469, N1517, N1587, N1596, N1609, and N1725. Residues 1525-1759 are a coiled coil; the sequence is IQKHMQLCED…VEQEKKYARC (235 aa).

In terms of assembly, laminin is a complex glycoprotein, consisting of three different polypeptide chains (alpha, beta, gamma), which are bound to each other by disulfide bonds into a cross-shaped molecule comprising one long and three short arms with globules at each end.

It localises to the secreted. The protein localises to the extracellular space. It is found in the extracellular matrix. Its subcellular location is the basement membrane. Functionally, binding to cells via a high affinity receptor, laminin is thought to mediate the attachment, migration and organization of cells into tissues during embryonic development by interacting with other extracellular matrix components. The protein is Laminin subunit beta-4 (LAMB4) of Homo sapiens (Human).